Reading from the N-terminus, the 538-residue chain is Calcium-dependent protein kinase 3 (538 aa).

The tract at residues 23 to 70 is disordered; the sequence is PKKSIERIKKKKDSNKSIKSQHKFEGSKISNKNNELKDVKSKDPKNYE. The segment covering 56 to 68 has biased composition (basic and acidic residues); that stretch reads NELKDVKSKDPKN. One can recognise a Protein kinase domain in the interval 112-367; it reads NLSEEPLGKG…ASEALKHPWF (256 aa). Residues 118-126 and Lys-141 contribute to the ATP site; that span reads LGKGTYGCV. Residue Asp-232 is the Proton acceptor of the active site. The short motif at 387–395 is the J domain autoinhibitory motif element; sequence NFKNYALLL. The segment at 387 to 422 is j domain; that stretch reads NFKNYALLLKLQKLAMTIIAQQSNDYDLQQLKAVFL. The short motif at 396-405 is the J domain EF-hand interaction motif element; it reads KLQKLAMTII. 3 consecutive EF-hand domains span residues 412 to 447, 450 to 481, and 482 to 517; these read YDLQQLKAVFLYLDEDGKGNITKNQLKKGLENSGLK, QNFDVLLDQIDSDGSGRIDYTEFLAAALDRKH, and LSKKLIYCAFRVFDVDNDGEITTAELAHVTFFVILF. Ca(2+)-binding residues include Asp-460, Asp-462, Ser-464, Arg-466, Glu-471, Asp-495, Asp-497, Asp-499, Glu-501, and Glu-506.

It belongs to the protein kinase superfamily. Ser/Thr protein kinase family. CDPK subfamily. Mg(2+) serves as cofactor.

It is found in the cytoplasm. The enzyme catalyses L-seryl-[protein] + ATP = O-phospho-L-seryl-[protein] + ADP + H(+). It carries out the reaction L-threonyl-[protein] + ATP = O-phospho-L-threonyl-[protein] + ADP + H(+). Activated by calcium. Upon calcium binding to the EF-hand domain 2, the C-terminus of the junction domain (J domain) undergoes a conformational change which results in the dissociation of the pseudo-substrate inhibitory motif from the catalytic domain. This, in turn, may facilitate the autophosphorylation of the activation loop at Thr-273, which leads to the kinase activation. Its function is as follows. Calcium-dependent protein kinase which acts as a sensor and effector of intracellular Ca(2+) levels probably in part downstream of cGMP-activated PKG kinase. In the mosquito midgut, regulates the gliding motility of the ookinete which is essential for the ookinete to invade the midgut epithelium. However, another study showed that while required for ookinete invasion of the midgut epithelium, is not required for ookinete gliding motility. The polypeptide is Calcium-dependent protein kinase 3 (Plasmodium yoelii yoelii).